Consider the following 1141-residue polypeptide: Myosin-binding protein C, fast-type (1141 aa).

The interval 1–62 (MPEAKPAAKK…VFLKKPDSVS (62 aa)) is disordered. The span at 13–39 (KGKDAPKGAPKEAPPKEAPAEAPKEAP) shows a compositional bias: basic and acidic residues. Ig-like C2-type domains are found at residues 50–153 (PTGV…NIDV), 255–344 (SAAF…VKEP), 345–437 (PVLI…VEEK), 438–538 (QLEV…KQEP), and 539–638 (PKIH…VVDV). Fibronectin type-III domains follow at residues 641-737 (PPEA…IAPT) and 739-834 (EPLH…IREI). An Ig-like C2-type 6 domain is found at 838 to 932 (PKIRLPRHLR…ATIRIRVVEK (95 aa)). One can recognise a Fibronectin type-III 3 domain in the interval 935–1030 (PPINVMVKEV…SKNTARILKT (96 aa)). One can recognise an Ig-like C2-type 7 domain in the interval 1048–1141 (PKFLTPLIDR…ECKLEVRVPQ (94 aa)).

The protein belongs to the immunoglobulin superfamily. MyBP family.

Functionally, thick filament-associated protein located in the crossbridge region of vertebrate striated muscle a bands. In vitro it binds MHC, F-actin and native thin filaments, and modifies the activity of actin-activated myosin ATPase. It may modulate muscle contraction or may play a more structural role. The chain is Myosin-binding protein C, fast-type (MYBPC2) from Homo sapiens (Human).